Consider the following 191-residue polypeptide: Crossover junction endodeoxyribonuclease RuvC (191 aa).

Active-site residues include Asp-7, Glu-67, and Asp-140. Mg(2+) is bound by residues Asp-7, Glu-67, and Asp-140.

It belongs to the RuvC family. As to quaternary structure, homodimer which binds Holliday junction (HJ) DNA. The HJ becomes 2-fold symmetrical on binding to RuvC with unstacked arms; it has a different conformation from HJ DNA in complex with RuvA. In the full resolvosome a probable DNA-RuvA(4)-RuvB(12)-RuvC(2) complex forms which resolves the HJ. Mg(2+) is required as a cofactor.

Its subcellular location is the cytoplasm. The catalysed reaction is Endonucleolytic cleavage at a junction such as a reciprocal single-stranded crossover between two homologous DNA duplexes (Holliday junction).. The RuvA-RuvB-RuvC complex processes Holliday junction (HJ) DNA during genetic recombination and DNA repair. Endonuclease that resolves HJ intermediates. Cleaves cruciform DNA by making single-stranded nicks across the HJ at symmetrical positions within the homologous arms, yielding a 5'-phosphate and a 3'-hydroxyl group; requires a central core of homology in the junction. The consensus cleavage sequence is 5'-(A/T)TT(C/G)-3'. Cleavage occurs on the 3'-side of the TT dinucleotide at the point of strand exchange. HJ branch migration catalyzed by RuvA-RuvB allows RuvC to scan DNA until it finds its consensus sequence, where it cleaves and resolves the cruciform DNA. In Pelodictyon phaeoclathratiforme (strain DSM 5477 / BU-1), this protein is Crossover junction endodeoxyribonuclease RuvC.